The chain runs to 357 residues: O-methyltransferase pgmB (357 aa).

Asp-206 provides a ligand contact to S-adenosyl-L-methionine. Residue His-256 is the Proton acceptor of the active site.

It belongs to the class I-like SAM-binding methyltransferase superfamily. Cation-independent O-methyltransferase family.

It participates in pigment biosynthesis. Its pathway is secondary metabolite biosynthesis. O-methyltransferase; part of the gene cluster that mediates the biosynthesis of pleosporalin A, ascomycone A, as well as a third cryptic naphthoquinone derived pigment, all responsible for the coloration of conidia. Specifically methylates position C-6 of the pgmA product 3-acetonyl-1,6,8-trihydroxy-2-naphthaldehyde to yield fusarubinaldehyde. The pathway begins with the biosynthesis of the cyclized heptaketide 3-acetonyl-1,6,8-trihydroxy-2-naphthaldehyde by the NR-PKS pgmA. The C-6 hydroxyl group is further methylated by the O-methyltransferase pgmB to yield fusarubinaldehyde which is in turn oxidized by the cytochrome P450 monooxygenase pgmC at C-9. The C-1 hydroxyl group is then methylated spontaneously. Although pgmE, pgmD and pgmH are essential for the production of pleosporalin A, it is not the case for the 2 other final products and it remains difficult to assign a specific function to each enzyme. PgmF and pgmG seem not to be involved in pigment biosynthesis although they were regulated by the cluster-specific transcription factor pgmR. This Aspergillus terreus (strain NIH 2624 / FGSC A1156) protein is O-methyltransferase pgmB.